Consider the following 427-residue polypeptide: Kallistatin (427 aa).

The signal sequence occupies residues 1–20 (MHLIDYLLLLLVGLLALSHG). Residues N33, N108, N157, and N238 are each glycosylated (N-linked (GlcNAc...) asparagine).

This sequence belongs to the serpin family. As to quaternary structure, monomer and some homodimers.

Its subcellular location is the secreted. Inhibits human amidolytic and kininogenase activities of tissue kallikrein. The chain is Kallistatin (SERPINA4) from Pongo abelii (Sumatran orangutan).